A 1169-amino-acid polypeptide reads, in one-letter code: Chromosome partition protein Smc (1169 aa).

Residue 32–39 coordinates ATP; it reads PNGCGKSN. Coiled-coil stretches lie at residues 170 to 265 and 307 to 481; these read ISKY…TGEE and IRHT…ERLN. One can recognise an SMC hinge domain in the interval 525-620; sequence DRLGEKIEVA…CASDPAEAAE (96 aa). Coiled coils occupy residues 656 to 914 and 985 to 1014; these read ALAR…MKLA and RYLEEQDRDLTESLATLEQAIEKIDRECRA.

The protein belongs to the SMC family. In terms of assembly, homodimer.

It is found in the cytoplasm. Functionally, required for chromosome condensation and partitioning. This is Chromosome partition protein Smc from Methylococcus capsulatus (strain ATCC 33009 / NCIMB 11132 / Bath).